Consider the following 917-residue polypeptide: MSSTLSEGQTLIKKSLSPSKATSTNNKGHVFVEPQTPLKNSNKASTSEAALPETLKIMGPLTTPTKVLDAPSSDPWTPTSNLKMLISAASPEIRNREKERAVDSSESENSQETEQGEEVEKLHISRKDKSLGLLCYKFLARYPNYPNPALNNGISLDDVAAELHVERRRIYDIMNVLESLNMVSRLAKNRYTWHGRVKLAQTLAVLKRAGKENRYEQLMQQIRQRSQEREEREFDLDGEEKENEEMSSFEVDGDSGLADLPGADSKAASANSRKDKSLRVMSQKFVMLFLVSSPPVVSLDVAAKILIGEDHVVDQDKNKFKTKIRRLYDIANVLSSLELIKKVHVTEDKGRKPAFKWTGPEDIPSPKDLEISTTSSAPKPLESRSSVENCAKNLFSSPGTKRGFTRHHSLVKLVKSIQDDRRKINSAPSSPIKMTGDSADSDFYTTKMAHLAAICKKHLDEQSADGRPNNAVTDSSQSSKQPESTSASNHGPPGMQIPVLPAGAISYLPTKCSPIIPLLIPQHQTGGPYAVYMHPTSLRPQPTSLAVRSMTFESPVGANAKTSPATLTSNNQTNQSSSYGKEQTSPVNLKRASGEKSSVGSPSKMQRTEPKSVSPKLCEILQARLKARRGALTSNRPSARALHLEFSKPSESQPTVQTGTASLEHSLETFLEKEEKSQTSDNEAGLTPVRQPHSQPQKLSAPFQDMVLPSGPIHTETLIPAGYLIPISQQSIVNFREPQCSNESSKASTPTYNIYHTPTAGSRPAFPQEVTPTRLPLHRIPPISPFPSHGHRLHSPSPAILNFTLQNLGLIPGSVTPNPHTPEQSSSLQSPHPGLPHQGMIFVKPMSPARALQQTSIHGQPVTLISIPQALVTTPKGGQAFQQSFFHTPVSFPTVNTTAPKKIYIPQRKLDVSPEEI.

Positions 1–122 (MSSTLSEGQT…TEQGEEVEKL (122 aa)) are disordered. 2 stretches are compositionally biased toward polar residues: residues 16 to 27 (LSPSKATSTNNK) and 37 to 48 (PLKNSNKASTSE). Residues 93 to 103 (IRNREKERAVD) are compositionally biased toward basic and acidic residues. Residues 105–117 (SESENSQETEQGE) show a composition bias toward acidic residues. The DNA-binding element occupies 126–195 (RKDKSLGLLC…LAKNRYTWHG (70 aa)). Disordered regions lie at residues 221–252 (QIRQ…FEVD), 353–386 (PAFK…SRSS), 461–497 (EQSA…GMQI), 556–615 (VGAN…SVSP), 671–698 (LEKE…QPQK), and 813–834 (GSVT…PHPG). The span at 233-252 (EFDLDGEEKENEEMSSFEVD) shows a compositional bias: acidic residues. Residues 273–359 (RKDKSLRVMS…GRKPAFKWTG (87 aa)) mediate DNA binding. A compositionally biased stretch (polar residues) spans 371–386 (ISTTSSAPKPLESRSS). Composition is skewed to low complexity over residues 475-488 (SSQS…TSAS) and 568-578 (TSNNQTNQSSS). The segment covering 595–605 (EKSSVGSPSKM) has biased composition (polar residues). Residues 815–830 (VTPNPHTPEQSSSLQS) are compositionally biased toward polar residues.

Belongs to the E2F/DP family. Homodimer and heterodimer: mainly forms homodimers and, to a lesser extent, heterodimers with e2f7.

It localises to the nucleus. Functionally, atypical E2F transcription factor that participates in various processes such as angiogenesis and polyploidization of specialized cells. Mainly acts as a transcription repressor that binds DNA independently of DP proteins and specifically recognizes the E2 recognition site 5'-TTTC[CG]CGC-3'. Directly represses transcription of classical E2F transcription factors such as e2f1. Acts as a regulator of S-phase by recognizing and binding the E2-related site 5'-TTCCCGCC-3' and mediating repression of G1/S-regulated genes. Acts as a promoter of sprouting angiogenesis, possibly by acting as a transcription activator and promoting expression of vegfa. The protein is Transcription factor E2F8 (e2f8) of Danio rerio (Zebrafish).